The primary structure comprises 180 residues: MSRIGKLPIKIVDSVKVDINDNIVTVEGKRGKLSQEINSRIRVRVEDSNIIVERSLDDKQTRAFHGLYRSLIFNMVKGVSDGFSKSLTINGIGYRVEQQGTSLFFNLGYSTQFEYVIPEGVNIRLEGNTKIAVEGIDKCRVGQVAAEIRSLRVPEPYKGKGIRYDNEVSRRKVGKSGVKK.

It belongs to the universal ribosomal protein uL6 family. In terms of assembly, part of the 50S ribosomal subunit.

This protein binds to the 23S rRNA, and is important in its secondary structure. It is located near the subunit interface in the base of the L7/L12 stalk, and near the tRNA binding site of the peptidyltransferase center. This is Large ribosomal subunit protein uL6 from Borrelia hermsii (strain HS1 / DAH).